The sequence spans 530 residues: Transcriptional regulator VasH (530 aa).

One can recognise a Sigma-54 factor interaction domain in the interval 193 to 422 (LIGESAAMQK…LKHLIEFGCA (230 aa)). ATP is bound by residues 221 to 228 (GETGTGKE) and 284 to 293 (ANGGTLFLDE).

Functionally, transcriptional regulator of the type VI secretion system. The protein is Transcriptional regulator VasH of Vibrio cholerae serotype O1 (strain ATCC 39315 / El Tor Inaba N16961).